The following is a 149-amino-acid chain: Transcriptional repressor NrdR (149 aa).

A zinc finger spans residues 3–34 (CPFCSENDTKVIDSRLVADGHQVRRRRQCLAC). Residues 49–139 (PRVIKSNGNR…VYRSFEDVRE (91 aa)) form the ATP-cone domain.

This sequence belongs to the NrdR family. Zn(2+) is required as a cofactor.

Negatively regulates transcription of bacterial ribonucleotide reductase nrd genes and operons by binding to NrdR-boxes. The chain is Transcriptional repressor NrdR from Vibrio cholerae serotype O1 (strain ATCC 39541 / Classical Ogawa 395 / O395).